The sequence spans 423 residues: Replication factor C large subunit (423 aa).

Position 50–57 (50–57 (GPAGCGKT)) interacts with ATP.

It belongs to the activator 1 small subunits family. RfcL subfamily. Heteromultimer composed of small subunits (RfcS) and large subunits (RfcL).

Functionally, part of the RFC clamp loader complex which loads the PCNA sliding clamp onto DNA. This is Replication factor C large subunit from Staphylothermus marinus (strain ATCC 43588 / DSM 3639 / JCM 9404 / F1).